The following is a 166-amino-acid chain: D-aminoacyl-tRNA deacylase (166 aa).

Residues 142-143 carry the Gly-cisPro motif, important for rejection of L-amino acids motif; sequence GP.

This sequence belongs to the DTD family. As to quaternary structure, homodimer.

The protein resides in the cytoplasm. It catalyses the reaction glycyl-tRNA(Ala) + H2O = tRNA(Ala) + glycine + H(+). It carries out the reaction a D-aminoacyl-tRNA + H2O = a tRNA + a D-alpha-amino acid + H(+). Functionally, an aminoacyl-tRNA editing enzyme that deacylates mischarged D-aminoacyl-tRNAs. Also deacylates mischarged glycyl-tRNA(Ala), protecting cells against glycine mischarging by AlaRS. Acts via tRNA-based rather than protein-based catalysis; rejects L-amino acids rather than detecting D-amino acids in the active site. By recycling D-aminoacyl-tRNA to D-amino acids and free tRNA molecules, this enzyme counteracts the toxicity associated with the formation of D-aminoacyl-tRNA entities in vivo and helps enforce protein L-homochirality. In Ralstonia nicotianae (strain ATCC BAA-1114 / GMI1000) (Ralstonia solanacearum), this protein is D-aminoacyl-tRNA deacylase.